Here is a 235-residue protein sequence, read N- to C-terminus: Uridylate kinase (235 aa).

9–12 (KLSG) contributes to the ATP binding site. The involved in allosteric activation by GTP stretch occupies residues 17 to 22 (GKDGYG). Residue Gly-51 coordinates UMP. The ATP site is built by Gly-52 and Arg-56. UMP-binding positions include Asp-71 and 132 to 139 (TGNPYFTT). ATP is bound by residues Thr-159, Tyr-165, and Asp-168.

The protein belongs to the UMP kinase family. As to quaternary structure, homohexamer.

The protein resides in the cytoplasm. The catalysed reaction is UMP + ATP = UDP + ADP. It functions in the pathway pyrimidine metabolism; CTP biosynthesis via de novo pathway; UDP from UMP (UMPK route): step 1/1. Its activity is regulated as follows. Allosterically activated by GTP. Inhibited by UTP. In terms of biological role, catalyzes the reversible phosphorylation of UMP to UDP. This Chlorobium luteolum (strain DSM 273 / BCRC 81028 / 2530) (Pelodictyon luteolum) protein is Uridylate kinase.